We begin with the raw amino-acid sequence, 353 residues long: Putative actin-28 (353 aa).

This sequence belongs to the actin family.

The protein resides in the cytoplasm. Its subcellular location is the cytoskeleton. The enzyme catalyses ATP + H2O = ADP + phosphate + H(+). Functionally, actins are highly conserved proteins that are involved in various types of cell motility and are ubiquitously expressed in all eukaryotic cells. Multiple isoforms are involved in various cellular functions such as cytoskeleton structure, cell mobility, chromosome movement and muscle contraction. This is Putative actin-28 (act28) from Dictyostelium discoideum (Social amoeba).